The primary structure comprises 97 residues: Co-chaperonin GroES (97 aa).

This sequence belongs to the GroES chaperonin family. Heptamer of 7 subunits arranged in a ring. Interacts with the chaperonin GroEL.

The protein localises to the cytoplasm. In terms of biological role, together with the chaperonin GroEL, plays an essential role in assisting protein folding. The GroEL-GroES system forms a nano-cage that allows encapsulation of the non-native substrate proteins and provides a physical environment optimized to promote and accelerate protein folding. GroES binds to the apical surface of the GroEL ring, thereby capping the opening of the GroEL channel. This Salmonella agona (strain SL483) protein is Co-chaperonin GroES.